Consider the following 246-residue polypeptide: Ribonuclease PH (246 aa).

Phosphate is bound by residues R91 and G129 to R131.

This sequence belongs to the RNase PH family. In terms of assembly, homohexameric ring arranged as a trimer of dimers.

It carries out the reaction tRNA(n+1) + phosphate = tRNA(n) + a ribonucleoside 5'-diphosphate. Phosphorolytic 3'-5' exoribonuclease that plays an important role in tRNA 3'-end maturation. Removes nucleotide residues following the 3'-CCA terminus of tRNAs; can also add nucleotides to the ends of RNA molecules by using nucleoside diphosphates as substrates, but this may not be physiologically important. Probably plays a role in initiation of 16S rRNA degradation (leading to ribosome degradation) during starvation. The protein is Ribonuclease PH of Burkholderia cenocepacia (strain ATCC BAA-245 / DSM 16553 / LMG 16656 / NCTC 13227 / J2315 / CF5610) (Burkholderia cepacia (strain J2315)).